We begin with the raw amino-acid sequence, 123 residues long: UPF0102 protein CLK_1817 (123 aa).

The protein belongs to the UPF0102 family.

The chain is UPF0102 protein CLK_1817 from Clostridium botulinum (strain Loch Maree / Type A3).